We begin with the raw amino-acid sequence, 149 residues long: Cytochrome c oxidase subunit 5A, mitochondrial (149 aa).

The protein belongs to the cytochrome c oxidase subunit 5A family. Component of the cytochrome c oxidase (complex IV, CIV), a multisubunit enzyme composed of a catalytic core of 3 subunits and several supernumerary subunits. The complex exists as a monomer or a dimer and forms supercomplexes (SCs) in the inner mitochondrial membrane with ubiquinol-cytochrome c oxidoreductase (cytochrome b-c1 complex, complex III, CIII).

Its subcellular location is the mitochondrion inner membrane. It functions in the pathway energy metabolism; oxidative phosphorylation. Component of the cytochrome c oxidase, the last enzyme in the mitochondrial electron transport chain which drives oxidative phosphorylation. The respiratory chain contains 3 multisubunit complexes succinate dehydrogenase (complex II, CII), ubiquinol-cytochrome c oxidoreductase (cytochrome b-c1 complex, complex III, CIII) and cytochrome c oxidase (complex IV, CIV), that cooperate to transfer electrons derived from NADH and succinate to molecular oxygen, creating an electrochemical gradient over the inner membrane that drives transmembrane transport and the ATP synthase. Cytochrome c oxidase is the component of the respiratory chain that catalyzes the reduction of oxygen to water. Electrons originating from reduced cytochrome c in the intermembrane space (IMS) are transferred via the dinuclear copper A center (CU(A)) of subunit 2 and heme A of subunit 1 to the active site in subunit 1, a binuclear center (BNC) formed by heme A3 and copper B (CU(B)). The BNC reduces molecular oxygen to 2 water molecules using 4 electrons from cytochrome c in the IMS and 4 protons from the mitochondrial matrix. The sequence is that of Cytochrome c oxidase subunit 5A, mitochondrial from Drosophila melanogaster (Fruit fly).